The sequence spans 407 residues: Imidazolonepropionase (407 aa).

H68 and H70 together coordinate Fe(3+). Positions 68 and 70 each coordinate Zn(2+). The 4-imidazolone-5-propanoate site is built by R77, Y140, and H173. Residue Y140 coordinates N-formimidoyl-L-glutamate. H238 contributes to the Fe(3+) binding site. A Zn(2+)-binding site is contributed by H238. Q241 provides a ligand contact to 4-imidazolone-5-propanoate. D313 serves as a coordination point for Fe(3+). D313 lines the Zn(2+) pocket. N-formimidoyl-L-glutamate-binding residues include N315 and G317. Residue T318 coordinates 4-imidazolone-5-propanoate.

It belongs to the metallo-dependent hydrolases superfamily. HutI family. It depends on Zn(2+) as a cofactor. Requires Fe(3+) as cofactor.

The protein localises to the cytoplasm. It catalyses the reaction 4-imidazolone-5-propanoate + H2O = N-formimidoyl-L-glutamate. It functions in the pathway amino-acid degradation; L-histidine degradation into L-glutamate; N-formimidoyl-L-glutamate from L-histidine: step 3/3. Functionally, catalyzes the hydrolytic cleavage of the carbon-nitrogen bond in imidazolone-5-propanoate to yield N-formimidoyl-L-glutamate. It is the third step in the universal histidine degradation pathway. The polypeptide is Imidazolonepropionase (Burkholderia ambifaria (strain ATCC BAA-244 / DSM 16087 / CCUG 44356 / LMG 19182 / AMMD) (Burkholderia cepacia (strain AMMD))).